A 377-amino-acid chain; its full sequence is Nucleosome assembly protein 1;2 (377 aa).

Residues 26–80 adopt a coiled-coil conformation; that stretch reads VNVLKNKLHDLTGKHSNVTESLSPNVRKRVEALREIQTEHDELEAKFFEERAALE. The short motif at 47–62 is the Nuclear export signal element; that stretch reads LSPNVRKRVEALREIQ. The short motif at 223–228 is the Nuclear localization signal element; sequence KKKPKK. The disordered stretch occupies residues 298-377; that stretch reads EAAEDDYAEL…GERPPECKQQ (80 aa). Residues 299-342 show a composition bias toward acidic residues; it reads AAEDDYAELEDDEDEDDDEEDDEDEDEEEEDEEDDEDEEEDEDE. A Cysteine methyl ester modification is found at C374. C374 carries S-farnesyl cysteine lipidation. Residues 375 to 377 constitute a propeptide, removed in mature form; that stretch reads KQQ.

This sequence belongs to the nucleosome assembly protein (NAP) family. In terms of assembly, binds preferentially histone H1 in vitro. Interacts with CYCB1;1.

The protein resides in the nucleus. It localises to the cytoplasm. Its function is as follows. May modulate chromatin structure by regulation of nucleosome assembly/disassembly. Could function together with B-type cyclins in the regulation of microtubule dynamics. The protein is Nucleosome assembly protein 1;2 (NAP1;2) of Nicotiana tabacum (Common tobacco).